We begin with the raw amino-acid sequence, 286 residues long: Phosphoribosylaminoimidazole-succinocarboxamide synthase (286 aa).

The protein belongs to the SAICAR synthetase family.

It carries out the reaction 5-amino-1-(5-phospho-D-ribosyl)imidazole-4-carboxylate + L-aspartate + ATP = (2S)-2-[5-amino-1-(5-phospho-beta-D-ribosyl)imidazole-4-carboxamido]succinate + ADP + phosphate + 2 H(+). It participates in purine metabolism; IMP biosynthesis via de novo pathway; 5-amino-1-(5-phospho-D-ribosyl)imidazole-4-carboxamide from 5-amino-1-(5-phospho-D-ribosyl)imidazole-4-carboxylate: step 1/2. The polypeptide is Phosphoribosylaminoimidazole-succinocarboxamide synthase (Actinobacillus succinogenes (strain ATCC 55618 / DSM 22257 / CCUG 43843 / 130Z)).